The primary structure comprises 241 residues: Large ribosomal subunit protein uL3 (241 aa).

This sequence belongs to the universal ribosomal protein uL3 family. As to quaternary structure, part of the 50S ribosomal subunit. Forms a cluster with proteins L14 and L19.

Its function is as follows. One of the primary rRNA binding proteins, it binds directly near the 3'-end of the 23S rRNA, where it nucleates assembly of the 50S subunit. This Aquifex aeolicus (strain VF5) protein is Large ribosomal subunit protein uL3.